Here is a 412-residue protein sequence, read N- to C-terminus: Multifunctional CCA protein (412 aa).

ATP is bound by residues Gly-8 and Arg-11. Positions 8 and 11 each coordinate CTP. Mg(2+) is bound by residues Glu-21 and Asp-23. The ATP site is built by Arg-92, Arg-138, and Arg-141. Arg-92, Arg-138, and Arg-141 together coordinate CTP. Positions 227-328 constitute an HD domain; that stretch reads TGIHTMMTVA…IKLFYAIDVW (102 aa).

This sequence belongs to the tRNA nucleotidyltransferase/poly(A) polymerase family. Bacterial CCA-adding enzyme type 1 subfamily. As to quaternary structure, monomer. Can also form homodimers and oligomers. Mg(2+) is required as a cofactor. Ni(2+) serves as cofactor.

It carries out the reaction a tRNA precursor + 2 CTP + ATP = a tRNA with a 3' CCA end + 3 diphosphate. It catalyses the reaction a tRNA with a 3' CCA end + 2 CTP + ATP = a tRNA with a 3' CCACCA end + 3 diphosphate. Its function is as follows. Catalyzes the addition and repair of the essential 3'-terminal CCA sequence in tRNAs without using a nucleic acid template. Adds these three nucleotides in the order of C, C, and A to the tRNA nucleotide-73, using CTP and ATP as substrates and producing inorganic pyrophosphate. tRNA 3'-terminal CCA addition is required both for tRNA processing and repair. Also involved in tRNA surveillance by mediating tandem CCA addition to generate a CCACCA at the 3' terminus of unstable tRNAs. While stable tRNAs receive only 3'-terminal CCA, unstable tRNAs are marked with CCACCA and rapidly degraded. The polypeptide is Multifunctional CCA protein (Baumannia cicadellinicola subsp. Homalodisca coagulata).